The primary structure comprises 462 residues: MAPGRAVAGLLLLAATGLGRPSEGPELAFTEDVLRVFGANQSLSAAQLGRLLERLGAAPQQGALELGQLHFNQCLSAEDIFSLHGFSNVTQITSSNFTAICPAILQQLNFHPCEDPQKHSVKPSFSEVWGYGFLSVTIINLASLLGLILTPLIKKSYFPKILTYFVGLAIGTLFSNAIFQLIPEAFGFNPKIDNYVEKAVAVFGGFYMLFFVERTLKMLLKTYGQNDHTHFRNDDFGSKEKAHQPKTLPLPPVNGVTCYANPAVTEPNGHIHFDTVSVVSLQDGKAESSSCTCLKGPKLSEIGTIAWMITLCDALHNFIDGLAIGASYTLSLLQGLSTSIAILCEEFPHELGDFVILLNAGMSTRQALLFNFLSACSCYVGLAFGILVGNNFAPNIIFALAGGMFLYISLADMFPEMNDMLREKVTGRQTDFTFFMIQNAGMLTGFTAILLITLYAGDIELQ.

The N-terminal stretch at 1–19 (MAPGRAVAGLLLLAATGLG) is a signal peptide. Topologically, residues 20 to 132 (RPSEGPELAF…PSFSEVWGYG (113 aa)) are extracellular. N-linked (GlcNAc...) asparagine glycosylation is found at N40, N88, and N96. The chain crosses the membrane as a helical span at residues 133-153 (FLSVTIINLASLLGLILTPLI). The Cytoplasmic portion of the chain corresponds to 154 to 160 (KKSYFPK). Residues 161-181 (ILTYFVGLAIGTLFSNAIFQL) form a helical membrane-spanning segment. Residues 182 to 191 (IPEAFGFNPK) lie on the Extracellular side of the membrane. A helical transmembrane segment spans residues 192-212 (IDNYVEKAVAVFGGFYMLFFV). Residues 213–367 (ERTLKMLLKT…LNAGMSTRQA (155 aa)) are Cytoplasmic-facing. The XEXPHE-motif signature appears at 345–350 (EEFPHE). Residues 368–388 (LLFNFLSACSCYVGLAFGILV) form a helical membrane-spanning segment. Residues 389–390 (GN) are Extracellular-facing. A helical membrane pass occupies residues 391–411 (NFAPNIIFALAGGMFLYISLA). Residues 412–431 (DMFPEMNDMLREKVTGRQTD) are Cytoplasmic-facing. A helical membrane pass occupies residues 432 to 452 (FTFFMIQNAGMLTGFTAILLI). The Extracellular segment spans residues 453 to 462 (TLYAGDIELQ).

It belongs to the ZIP transporter (TC 2.A.5) family. In terms of assembly, homodimer. In terms of processing, N-glycosylated. N-glycosylation is not required for proper iron and zinc transport.

The protein localises to the cell membrane. Its subcellular location is the lysosome membrane. It localises to the apical cell membrane. The protein resides in the basolateral cell membrane. The enzyme catalyses Zn(2+)(out) + 2 hydrogencarbonate(out) = Zn(2+)(in) + 2 hydrogencarbonate(in). It catalyses the reaction selenite(out) + Zn(2+)(out) + hydrogencarbonate(out) = selenite(in) + Zn(2+)(in) + hydrogencarbonate(in). It carries out the reaction Mn(2+)(out) + 2 hydrogencarbonate(out) = Mn(2+)(in) + 2 hydrogencarbonate(in). The catalysed reaction is Fe(2+)(out) + 2 hydrogencarbonate(out) = Fe(2+)(in) + 2 hydrogencarbonate(in). The enzyme catalyses Cd(2+)(out) + 2 hydrogencarbonate(out) = Cd(2+)(in) + 2 hydrogencarbonate(in). It catalyses the reaction Co(2+)(out) + 2 hydrogencarbonate(out) = Co(2+)(in) + 2 hydrogencarbonate(in). In terms of biological role, electroneutral divalent metal cation:bicarbonate symporter of the plasma membrane mediating the cellular uptake of zinc and manganese, two divalent metal cations important for development, tissue homeostasis and immunity. Transports an electroneutral complex composed of a divalent metal cation and two bicarbonate anions or alternatively a bicarbonate and a selenite anion. Thereby, it also contributes to the cellular uptake of selenium, an essential trace metal and micronutrient. Also imports cadmium a non-essential metal which is cytotoxic and carcinogenic. May also transport iron and cobalt through membranes. Through zinc import, indirectly regulates the metal-dependent transcription factor MTF1 and the expression of some metalloproteases involved in cartilage catabolism and also probably heart development. Also indirectly regulates the expression of proteins involved in cell morphology and cytoskeleton organization. Indirectly controls innate immune function and inflammatory response by regulating zinc cellular uptake which in turn modulates the expression of genes specific of these processes. Protects, for instance, cells from injury and death at the onset of inflammation. By regulating zinc influx into monocytes also directly modulates their adhesion to endothelial cells and arteries. Reclaims manganese from the bile at the apical membrane of hepatocytes, thereby regulating the activity of the manganese-dependent enzymes through the systemic levels of the nutrient. Also participates in manganese reabsorption in the proximal tubule of the kidney. By mediating the extracellular uptake of manganese by cells of the blood-brain barrier, may also play a role in the transport of the micronutrient to the brain. With manganese cellular uptake also participates in mitochondrial proper function. Finally, also probably functions intracellularly, translocating zinc from lysosome to cytosol to indirectly enhance the expression of specific genes during TCR-mediated T cell activation. The polypeptide is Metal cation symporter ZIP8 (Rattus norvegicus (Rat)).